A 313-amino-acid chain; its full sequence is Ribonuclease Z (313 aa).

7 residues coordinate Zn(2+): His62, His64, Asp66, His67, His142, Asp212, and His270. Asp66 functions as the Proton acceptor in the catalytic mechanism.

Belongs to the RNase Z family. As to quaternary structure, homodimer. Zn(2+) is required as a cofactor.

It carries out the reaction Endonucleolytic cleavage of RNA, removing extra 3' nucleotides from tRNA precursor, generating 3' termini of tRNAs. A 3'-hydroxy group is left at the tRNA terminus and a 5'-phosphoryl group is left at the trailer molecule.. In terms of biological role, zinc phosphodiesterase, which displays some tRNA 3'-processing endonuclease activity. Probably involved in tRNA maturation, by removing a 3'-trailer from precursor tRNA. This is Ribonuclease Z from Cytophaga hutchinsonii (strain ATCC 33406 / DSM 1761 / CIP 103989 / NBRC 15051 / NCIMB 9469 / D465).